The chain runs to 350 residues: Putative ankyrin repeat protein RBE_0589 (350 aa).

ANK repeat units follow at residues 81-110, 114-151, and 153-182; these read DGFTLLHKSINERDYNIAGFLLERKANPNI, DIVTPLNRIAGKPLSKTEEDFHMAKLLLQKGALTEPTD, and SGWTPIQYAVFNEKIGIVELLIDYGANLDI.

This is Putative ankyrin repeat protein RBE_0589 from Rickettsia bellii (strain RML369-C).